The chain runs to 1657 residues: A disintegrin and metalloproteinase with thrombospondin motifs 7 (1657 aa).

The N-terminal stretch at 1–20 is a signal peptide; the sequence is MHRGPSLLLILCALASRVLG. Residues 21–220 constitute a propeptide that is removed on maturation; sequence PASGLVTEGR…QQQQKRRQQR (200 aa). Asparagine 84 carries an N-linked (GlcNAc...) asparagine glycan. The disordered stretch occupies residues 165–221; that stretch reads PGHAQPHVVYKHQGSRKQAQQGDSRPSGTCGMQVPPDLEQQREHWEQQQQKRRQQRS. Residues 180–191 show a composition bias toward polar residues; the sequence is RKQAQQGDSRPS. Residues 192–199 carry the Cysteine switch motif; the sequence is GTCGMQVP. Residue cysteine 194 coordinates Zn(2+). The Peptidase M12B domain occupies 226-437; the sequence is KWVETLVVAD…GWGLCLDDRP (212 aa). Cystine bridges form between cysteine 302–cysteine 356, cysteine 331–cysteine 338, cysteine 350–cysteine 432, cysteine 389–cysteine 416, cysteine 459–cysteine 482, cysteine 470–cysteine 488, cysteine 477–cysteine 507, cysteine 501–cysteine 512, cysteine 535–cysteine 572, cysteine 539–cysteine 577, and cysteine 550–cysteine 562. Histidine 372 is a binding site for Zn(2+). The active site involves glutamate 373. Positions 376 and 382 each coordinate Zn(2+). The Disintegrin domain maps to 447-522; sequence VLPGVLYDVN…VPEGFQPEAV (76 aa). The region spanning 523 to 578 is the TSP type-1 1 domain; sequence DGGWSGWSAWSDCSRSCGVGVRSSERQCTQPVPKNRGKYCVGERKRSQLCNLPACP. N-linked (GlcNAc...) asparagine glycosylation occurs at asparagine 622. A spacer region spans residues 683–794; it reads QTVSRTFKET…PGVHYQYTIQ (112 aa). 3 TSP type-1 domains span residues 804–863, 864–923, and 925–978; these read PEFS…EPCP, PRWW…NRHV, and CPST…QPCQ. 5 disordered regions span residues 1009–1034, 1073–1127, 1140–1237, 1283–1304, and 1317–1384; these read LAPRPSPASSPKPVSISNAIDEEELD, GGWT…GLEQ, EDTP…DVVE, GRDSPLEPGTPTFSSPELSSQH, and TVPT…ARNA. A compositionally biased stretch (pro residues) spans 1211-1224; it reads PQSPIPTQPSPPSI. Polar residues-rich tracts occupy residues 1293–1304 and 1327–1342; these read PTFSSPELSSQH and PSGQPQTPNLEGTQSP. 4 consecutive TSP type-1 domains span residues 1366-1414, 1417-1477, 1479-1522, and 1524-1584; these read QPSL…SGND, CTLA…CQPG, TKPP…PEPG, and CEES…LCSH. The 41-residue stretch at 1587–1627 folds into the PLAC domain; that stretch reads WPESSRPCATEDCELVEPPRCERDRLSFNFCETLRLLGRCQ.

Interacts with COMP. It depends on Zn(2+) as a cofactor. In terms of processing, N-glycosylated. Can be O-fucosylated by POFUT2 on a serine or a threonine residue found within the consensus sequence C1-X(2)-(S/T)-C2-G of the TSP type-1 repeat domains where C1 and C2 are the first and second cysteine residue of the repeat, respectively. Fucosylated repeats can then be further glycosylated by the addition of a beta-1,3-glucose residue by the glucosyltransferase, B3GALTL. Fucosylation mediates the efficient secretion of ADAMTS family members. Can also be C-glycosylated with one or two mannose molecules on tryptophan residues within the consensus sequence W-X-X-W of the TPRs. N- and C-glycosylations can also facilitate secretion. Post-translationally, O-glycosylated proteoglycan; contains chondroitin sulfate. May be cleaved by a furin endopeptidase. The precursor is sequentially processed.

Its subcellular location is the secreted. The protein resides in the extracellular space. It is found in the extracellular matrix. Functionally, metalloprotease. Was previously shown to degrade COMP. However, a later study found no activity against COMP. The protein is A disintegrin and metalloproteinase with thrombospondin motifs 7 (Adamts7) of Mus musculus (Mouse).